A 608-amino-acid chain; its full sequence is ATP-binding protein Uup (608 aa).

2 ABC transporter domains span residues 7 to 217 (APVL…AADA) and 285 to 512 (VEAK…FAPV). ATP contacts are provided by residues 42 to 49 (GRNGAGKS) and 317 to 324 (GPNGAGKT). Residues 522-608 (AAPAAPKKSA…LEEKKENLAG (87 aa)) are C-terminal domain (CTD), binds DNA.

The protein belongs to the ABC transporter superfamily. ABCF family. Uup subfamily.

It localises to the cytoplasm. It catalyses the reaction ATP + H2O = ADP + phosphate + H(+). Its function is as follows. Probably plays a role in ribosome assembly or function. May be involved in resolution of branched DNA intermediates that result from template switching in postreplication gaps. Binds DNA and has ATPase activity. One of a cluster of genes involved in attachment of the holdfast to the cell. The holdfast is a structure that allows the bacteria to firmly adhere to surfaces. This is ATP-binding protein Uup from Caulobacter vibrioides (strain ATCC 19089 / CIP 103742 / CB 15) (Caulobacter crescentus).